A 25-amino-acid polypeptide reads, in one-letter code: Glucomannokinase (25 aa).

This sequence belongs to the ROK (NagC/XylR) family. Homodimer.

It carries out the reaction D-glucose + ATP = D-glucose 6-phosphate + ADP + H(+). It catalyses the reaction D-mannose + ATP = D-mannose 6-phosphate + ADP + H(+). Its pathway is carbohydrate degradation; glycolysis; D-glyceraldehyde 3-phosphate and glycerone phosphate from D-glucose: step 1/4. It participates in carbohydrate metabolism; mannose metabolism. With respect to regulation, competitively inhibited by 2-deoxy-glucose. In terms of biological role, the enzyme has great affinity for glucose and mannose. The chain is Glucomannokinase from Segatella bryantii (Prevotella bryantii).